The following is a 205-amino-acid chain: Listeria nuclear targeted protein A (205 aa).

A signal peptide spans 1–36; it reads MKKLVAWFNGLSKMWKVVVIIGAVFVVIIALTTGED.

In terms of assembly, interacts specifically with host BAHD1.

Its subcellular location is the secreted. The protein localises to the host nucleus. Functionally, relieves the repression of host cell immune response genes (interferon-stimulated genes) by blocking the recruitment of host BAHD1 to these genes. May modulate interferon-mediated immune response to control bacterial colonization of the host. The polypeptide is Listeria nuclear targeted protein A (lntA) (Listeria monocytogenes serovar 1/2a (strain ATCC BAA-679 / EGD-e)).